We begin with the raw amino-acid sequence, 993 residues long: MASSTVESFVAQQLQLLELERDAEVEERRSWQEHSSLRELQSRGVCLLKLQVSSQRTGLYGQRLVTFEPRKFGPAVVLPSNSFTSGDIVGLYDTNENSQLATGVLTRITQKSVTVAFDESHDLQLNLDRENTYRLLKLANDVTYKRLKKALMTLKKYHSGPASSLIDILLGSSTPSPAMEIPPLSFYNTTLDLSQKEAVSFALAQKELAIIHGPPGTGKTTTVVEIILQAVKQGLKVLCCAPSNIAVDNLVERLALCKKRILRLGHPARLLESVQHHSLDAVLARSDNAQIVADIRRDIDQVFGKNKKTQDKREKGNFRSEIKLLRKELKEREEAAIVQSLTAADVVLATNTGASSDGPLKLLPEDYFDVVVVDECAQALEASCWIPLLKAPKCILAGDHRQLPPTTVSHRAALAGLSRSLMERLAEKHGAGVVRMLTVQYRMHQAIMCWASEAMYHGQFTSHPSVAGHLLKDLPGVTDTEETRVPLLLIDTAGCGLLELEEEDSQSKGNPGEVRLVTLHIQALVDAGVQAGDIAVIAPYNLQVDLLRQSLSNKHPELEIKSVDGFQGREKEAVLLTFVRSNRKGEVGFLAEDRRINVAVTRARRHVAVICDSHTVNNHAFLETLVDYFTEHGEVRTAFEYLDDIVPENYTHEGSQGHSRVPKPKCPSTSIRKPASDQESGQETRAAPRHGRRKPSEKPPGSHVQSQHSSSANGSDRTGGPDRTEHFRATIEEFVASKESQLEFPTSLSSHDRLRVHQLAEEFGLRHDSTGEGKARHITVSRRSPASSGSVAPQPSSPPSPAQAEPEPRAEEPVTVVQAHCPVQLDLKALHLERLQRQQSSQAQTAKGQPGGDSRPQKASQKKKKKEPKGPVMALPCEEDFDALVSAVVKADNTCSFSKCSVSTTTLGQFCMHCSHRYYLSHHLPEIHGCGEKARAHARQRISREGVLYAGSGTKDRALDPAKRAQLQRRLDKKLGELSSQRTSRKKEKERGT.

Position 2 is an N-acetylalanine (A2). Residues 213-220 (GPPGTGKT), Q402, Y441, and E570 contribute to the ATP site. Residues 637–783 (TAFEYLDDIV…KARHITVSRR (147 aa)) are SS DNA-binding. Disordered stretches follow at residues 650–723 (YTHE…GPDR), 765–815 (LRHD…EPVT), and 837–872 (RQQS…KGPV). Composition is skewed to polar residues over residues 667-683 (PSTS…SGQE) and 703-716 (HVQS…NGSD). The region spanning 721–784 (PDRTEHFRAT…ARHITVSRRS (64 aa)) is the R3H domain. The segment covering 765–775 (LRHDSTGEGKA) has biased composition (basic and acidic residues). The segment covering 784 to 794 (SPASSGSVAPQ) has biased composition (low complexity). Residues S797 and S800 each carry the phosphoserine modification. A compositionally biased stretch (polar residues) spans 837–847 (RQQSSQAQTAK). Positions 862–866 (KKKKK) match the Nuclear localization signal motif. The AN1-type; degenerate zinc finger occupies 889-938 (VKADNTCSFSKCSVSTTTLGQFCMHCSHRYYLSHHLPEIHGCGEKARAHA). Zn(2+) is bound by residues C911, C914, H928, and C930. The tract at residues 953–993 (GTKDRALDPAKRAQLQRRLDKKLGELSSQRTSRKKEKERGT) is disordered. Residues 954-976 (TKDRALDPAKRAQLQRRLDKKLG) show a composition bias toward basic and acidic residues.

The protein belongs to the DNA2/NAM7 helicase family. Homooligomer. Interacts with RUVBL1. Interacts with RUVBL2. Interacts with GTF3C1. Interacts with ABT1. Interacts with ribosomes. As to expression, in all tissues examined.

It is found in the nucleus. The protein localises to the cytoplasm. Its subcellular location is the cell projection. It localises to the axon. It catalyses the reaction ATP + H2O = ADP + phosphate + H(+). Its function is as follows. 5' to 3' helicase that unwinds RNA and DNA duplexes in an ATP-dependent reaction. Specific to 5'-phosphorylated single-stranded guanine-rich sequences. May play a role in RNA metabolism, ribosome biogenesis or initiation of translation. May play a role in regulation of transcription. Interacts with tRNA-Tyr. In Mus musculus (Mouse), this protein is DNA-binding protein SMUBP-2 (Ighmbp2).